Consider the following 153-residue polypeptide: Zinc finger protein GIS2 (153 aa).

7 consecutive CCHC-type zinc fingers follow at residues 4 to 21 (KACY…DCDS), 23 to 40 (RLCY…DCTM), 47 to 64 (KQCY…ECTV), 65 to 82 (QRCF…ECPE), 92 to 109 (VSCY…DCMK), 116 to 133 (LKCY…DCQN), and 135 to 152 (RLCY…DCPK).

The protein localises to the cytoplasm. Its function is as follows. May act in the sexual differentiation pathway. This Saccharomyces cerevisiae (strain ATCC 204508 / S288c) (Baker's yeast) protein is Zinc finger protein GIS2 (GIS2).